We begin with the raw amino-acid sequence, 421 residues long: D-amino-acid oxidase (421 aa).

FAD is bound by residues Ala12, Gly13, Ala14, Val15, Gly47, Gly64, Ile65, Lys225, Ala226, Arg359, Gly385, Gly388, and Leu389. Residue Arg359 coordinates D-proline. Arg359 contacts D-serine.

The protein belongs to the DAMOX/DASOX family. The cofactor is FAD.

Its subcellular location is the cytoplasm. It is found in the secreted. The protein resides in the cell wall. It catalyses the reaction a D-alpha-amino acid + O2 + H2O = a 2-oxocarboxylate + H2O2 + NH4(+). In terms of biological role, catalyzes the oxidative deamination of D-amino acids with broad substrate specificity. This chain is D-amino-acid oxidase, found in Bradyrhizobium diazoefficiens (strain JCM 10833 / BCRC 13528 / IAM 13628 / NBRC 14792 / USDA 110).